Here is a 1530-residue protein sequence, read N- to C-terminus: Coiled-coil domain-containing protein 141 (1530 aa).

Residue Thr91 is modified to Phosphothreonine. Coiled coils occupy residues Val642 to Met706, Val758 to Glu783, and Ser861 to Asp970. Positions Ser1210–Ser1241 are disordered. The Ig-like domain occupies Pro1409–Gln1530.

In terms of assembly, interacts with DISC1. Interacts preferentially with phosphorylated forms of myosin regulatory light chain (MRLC). Interacts (via the N-terminal region) with HDAC6; inhibits the deacetylase activity of HDAC6. Interacts with KIBRA (via the C-terminal region); retains AMPAR in the cytosol after internalization. Post-translationally, ubiquitinated and degradated by the CDC20-APC/C pathway. During brain development, CDC20-APC/C complex degrades CCDC141 after centrosome translocation into the dilated area. CCDC141 is restabilized in the dilation until the centrosome enters the dilation, at which point it is once again immediately destabilized by CDC20-APC/C complex. The oscillatory regulation of CCDC141 protein is needed for proper cortical migration. Phosphorylation at Thr-91 by PLK1 affects CCDC141 degradation.

Its subcellular location is the cytoplasm. It localises to the cytoskeleton. It is found in the microtubule organizing center. The protein localises to the centrosome. In terms of biological role, plays a critical role in cortical radial and GnRH neurons migration during brain development. Regulates cortical radial migration by negatively controlling the activity of histone deacetylase 6 (HDAC6) and promotes centrosome maturation. CAMDI is required for dilation formation of cortical neurons during radial migration. Plays a critical role in learning and memory performance through regulation of AMPA-selective glutamate receptors (AMPARs) cell surface expression in competition with KIBRA. The chain is Coiled-coil domain-containing protein 141 (CCDC141) from Homo sapiens (Human).